Reading from the N-terminus, the 192-residue chain is Xanthine phosphoribosyltransferase (192 aa).

The xanthine site is built by leucine 20 and asparagine 27. 128-132 (ANGDA) is a binding site for 5-phospho-alpha-D-ribose 1-diphosphate. Xanthine is bound at residue lysine 156.

This sequence belongs to the purine/pyrimidine phosphoribosyltransferase family. Xpt subfamily. As to quaternary structure, homodimer.

It localises to the cytoplasm. The catalysed reaction is XMP + diphosphate = xanthine + 5-phospho-alpha-D-ribose 1-diphosphate. The protein operates within purine metabolism; XMP biosynthesis via salvage pathway; XMP from xanthine: step 1/1. Converts the preformed base xanthine, a product of nucleic acid breakdown, to xanthosine 5'-monophosphate (XMP), so it can be reused for RNA or DNA synthesis. The sequence is that of Xanthine phosphoribosyltransferase from Staphylococcus aureus (strain bovine RF122 / ET3-1).